The chain runs to 203 residues: Ras-related protein Rab-24 (203 aa).

Tyr-17 is modified (phosphotyrosine). GTP-binding residues include Gly-19, Lys-20, Thr-21, and Thr-40. Mg(2+) is bound by residues Thr-21, Thr-40, and Asp-63. The interval 30–45 (DRFLVGPYQNTIGAAF) is switch I. The tract at residues 63–80 (DTAGSERYEAMSRIYYRG) is switch II. GTP contacts are provided by Gly-66, Lys-121, Asp-123, and Lys-156. Tyr-172 carries the phosphotyrosine modification. Residues Cys-200 and Cys-201 are each lipidated (S-geranylgeranyl cysteine).

It belongs to the small GTPase superfamily. Rab family. In terms of assembly, interacts with ZFYVE20. Does not interact with the GDP dissociation inhibitors ARHGDIA and ARHGDIB. Requires Mg(2+) as cofactor. Prenylated; prenylation is required for RAB24 localization to autophagosomes. Isoprenylation is inefficient compared to other Rab family members. In terms of processing, phosphorylated at Tyr-17 and Tyr-172. Cytosolic pool of RAB24 is more phosphorylated than the membrane-associated pool. Widely expressed, with highest expression in brain.

It localises to the cytoplasm. Its subcellular location is the cytosol. The protein localises to the membrane. The protein resides in the cytoplasmic vesicle. It is found in the autophagosome membrane. It localises to the perinuclear region. Its subcellular location is the cytoskeleton. The protein localises to the spindle. The enzyme catalyses GTP + H2O = GDP + phosphate + H(+). Its activity is regulated as follows. Regulated by guanine nucleotide exchange factors (GEFs) which promote the exchange of bound GDP for free GTP. Regulated by GTPase activating proteins (GAPs) which increase the GTP hydrolysis activity. Inhibited by GDP dissociation inhibitors (GDIs). In terms of biological role, the small GTPases Rab are key regulators of intracellular membrane trafficking, from the formation of transport vesicles to their fusion with membranes. Rabs cycle between an inactive GDP-bound form and an active GTP-bound form that is able to recruit to membranes different sets of downstream effectors directly responsible for vesicle formation, movement, tethering and fusion. RAB24 is an atypical RAB protein that presents low GTPase activity and thereby exists predominantly in the GTP-bound active state. RAB24 is required for the clearance of late autophagic vacuoles under basal conditions. It is not needed for starvation-induced autophagy. Involved in the modulation of meiotic apparatus assembly and meiotic progression during oocyte maturation, possibly through regulation of kinetochore-microtubule interaction. The protein is Ras-related protein Rab-24 of Mus musculus (Mouse).